The sequence spans 99 residues: Integration host factor subunit alpha (99 aa).

The segment at Phe-49 to Pro-72 is disordered.

The protein belongs to the bacterial histone-like protein family. As to quaternary structure, heterodimer of an alpha and a beta chain.

Its function is as follows. This protein is one of the two subunits of integration host factor, a specific DNA-binding protein that functions in genetic recombination as well as in transcriptional and translational control. In Escherichia coli O9:H4 (strain HS), this protein is Integration host factor subunit alpha.